The following is a 403-amino-acid chain: MGELSMQEMPLPALFEQGSKIHASAESSVDQDTVRKGCEILRQCEEMIGKLGLFSVNETKEDISTANLKYILVPYYLAELTEKVADNDRIKVLKASQAKLKEFISFCETMELVPEEEIETSTQGGANSSVDRRAKKIARFKRQRAAESKLLEIKERKERRGRSTKAAALSSPVETEEDDVLDDDGEEEREAWLTTISLGLCKAFDLLEMLKKEEEILSAVKEKQLQDGEREFSQAILDERTKKVETWHRDAAARAHHTKPAAPITCATFAQDVIEGRAKVSQAHEHKHQPLIFGPASLVGRNPTTEREKIAAQVFQPHYRLPTMSIEEAGLTEMNMMNEWQERNVKLMEEANSSWYKDTPKSRPGEDDEEDDDDAAQDKARAWDDWKDDNPRGAGNKKLTPCG.

Disordered regions lie at residues 158 to 184 (ERRG…LDDD) and 351 to 403 (ANSS…TPCG). Composition is skewed to acidic residues over residues 174 to 184 (ETEEDDVLDDD) and 366 to 375 (EDDEEDDDDA). The span at 376 to 391 (AQDKARAWDDWKDDNP) shows a compositional bias: basic and acidic residues.

This sequence belongs to the IGBP1/TAP42 family.

Involved in the regulation of the TOR signaling pathway. Seems to act as a regulator of PP2A catalytic activity. This Nicotiana tabacum (Common tobacco) protein is PP2A regulatory subunit TAP46.